A 136-amino-acid chain; its full sequence is Large ribosomal subunit protein uL16c (136 aa).

The protein belongs to the universal ribosomal protein uL16 family. As to quaternary structure, part of the 50S ribosomal subunit.

The protein localises to the plastid. It localises to the chloroplast. The polypeptide is Large ribosomal subunit protein uL16c (Chlamydomonas reinhardtii (Chlamydomonas smithii)).